Reading from the N-terminus, the 257-residue chain is Imidazole glycerol phosphate synthase subunit HisF (257 aa).

Catalysis depends on residues Asp-12 and Asp-131.

This sequence belongs to the HisA/HisF family. In terms of assembly, heterodimer of HisH and HisF.

Its subcellular location is the cytoplasm. The enzyme catalyses 5-[(5-phospho-1-deoxy-D-ribulos-1-ylimino)methylamino]-1-(5-phospho-beta-D-ribosyl)imidazole-4-carboxamide + L-glutamine = D-erythro-1-(imidazol-4-yl)glycerol 3-phosphate + 5-amino-1-(5-phospho-beta-D-ribosyl)imidazole-4-carboxamide + L-glutamate + H(+). It functions in the pathway amino-acid biosynthesis; L-histidine biosynthesis; L-histidine from 5-phospho-alpha-D-ribose 1-diphosphate: step 5/9. In terms of biological role, IGPS catalyzes the conversion of PRFAR and glutamine to IGP, AICAR and glutamate. The HisF subunit catalyzes the cyclization activity that produces IGP and AICAR from PRFAR using the ammonia provided by the HisH subunit. The polypeptide is Imidazole glycerol phosphate synthase subunit HisF (Burkholderia orbicola (strain MC0-3)).